The chain runs to 231 residues: MTQQRVSSVFIETVPIVLASASPRRRSLLEQLGLLFKIVSVDSEPLPLSSEHPLEYVIRAAKVKAFAAAALEPRSVIIAADTVVIYTKDDVFEIIGKPQSGNDSFSMLSRFQGGKHQVITGCCIVWPLEENITSVQYEIFYDTASIQFGQWDKDILSSYVSTGESNDKAGAFSIQGIGAFLIDIIEGNYTTILGLPLPQLVKRLLKRKAIKVVLNKNSEETISSDFLTYSR.

Catalysis depends on D81, which acts as the Proton acceptor.

It belongs to the Maf family. YhdE subfamily. Requires a divalent metal cation as cofactor.

Its subcellular location is the cytoplasm. It catalyses the reaction dTTP + H2O = dTMP + diphosphate + H(+). The catalysed reaction is UTP + H2O = UMP + diphosphate + H(+). Functionally, nucleoside triphosphate pyrophosphatase that hydrolyzes dTTP and UTP. May have a dual role in cell division arrest and in preventing the incorporation of modified nucleotides into cellular nucleic acids. The polypeptide is dTTP/UTP pyrophosphatase (Lawsonia intracellularis (strain PHE/MN1-00)).